A 396-amino-acid polypeptide reads, in one-letter code: Cell adhesion molecule 3 (396 aa).

An N-terminal signal peptide occupies residues M1–A22. The Ig-like V-type domain occupies N23–V124. Residues N23–H328 are Extracellular-facing. 3 disulfides stabilise this stretch: C48–C108, C150–C207, and C252–C297. 2 consecutive Ig-like C2-type domains span residues P128 to E226 and P231 to N313. N288 carries N-linked (GlcNAc...) asparagine glycosylation. The helical transmembrane segment at A329–L349 threads the bilayer. Topologically, residues G350–I396 are cytoplasmic. Residues A365–I396 form a disordered region. S386 bears the Phosphoserine mark.

Belongs to the nectin family. Homodimer. Can form trans-heterodimers with NECTIN3. Interacts with EPB41L1, DLG3, PALS2 and CASK.

It is found in the cell membrane. The protein resides in the cell junction. Involved in cell-cell adhesion. Has both calcium-independent homophilic cell-cell adhesion activity and calcium-independent heterophilic cell-cell adhesion activity with IGSF4, NECTIN1 and NECTIN3. Interaction with EPB41L1 may regulate structure or function of cell-cell junctions. This chain is Cell adhesion molecule 3 (Cadm3), found in Rattus norvegicus (Rat).